Reading from the N-terminus, the 666-residue chain is SNARE-interacting protein KEULE (666 aa).

Positions lysine 340–leucine 377 form a coiled coil. The segment at lysine 534–aspartate 589 is disordered. Positions serine 550 to methionine 568 are enriched in low complexity.

The protein belongs to the STXBP/unc-18/SEC1 family. Binds the syntaxin KNOLLE. Interacts with SEC6. Expressed throughout the plant, both in mitotically active and quiescent cells. Enriched in dividing tissues.

Its subcellular location is the cytoplasm. The protein localises to the membrane. The protein resides in the cytoskeleton. It is found in the phragmoplast. Functionally, regulator of vesicle trafficking involved in cytokinesis and root hair development, but not required for cell elongation. The protein is SNARE-interacting protein KEULE (KEU) of Arabidopsis thaliana (Mouse-ear cress).